We begin with the raw amino-acid sequence, 272 residues long: MKTVSQLIDMKQKQTKISMVTAYDFPSAKQVEAAGIDMILVGDSLGMTVLGYESIVQVTLADMIHHGRAVRRGAPNTFVVVDMPIGAVGISMTQDLNHALKLYQETNANAIKAEGAHITPFIEKATAIGIPVVAHLGLTPQSVGVMGYKLQGATKEAAEQLILDAKNVEQAGAVALVLEAIPNDLAEEISKHLTIPVIGIGAGKGTDGQVLVYHDMLNYGVEHKAKFVKQFADFSVGVDGLKQYDQEVKSGAFPSEEYTYKKKIMNEVNNND.

Mg(2+) is bound by residues D43 and D82. Residues 43 to 44, D82, and K112 each bind 3-methyl-2-oxobutanoate; that span reads DS. E114 contacts Mg(2+). Residue E179 is the Proton acceptor of the active site.

It belongs to the PanB family. Homodecamer; pentamer of dimers. Mg(2+) serves as cofactor.

It is found in the cytoplasm. It catalyses the reaction 3-methyl-2-oxobutanoate + (6R)-5,10-methylene-5,6,7,8-tetrahydrofolate + H2O = 2-dehydropantoate + (6S)-5,6,7,8-tetrahydrofolate. The protein operates within cofactor biosynthesis; (R)-pantothenate biosynthesis; (R)-pantoate from 3-methyl-2-oxobutanoate: step 1/2. Catalyzes the reversible reaction in which hydroxymethyl group from 5,10-methylenetetrahydrofolate is transferred onto alpha-ketoisovalerate to form ketopantoate. The sequence is that of 3-methyl-2-oxobutanoate hydroxymethyltransferase from Staphylococcus aureus (strain Newman).